Here is a 354-residue protein sequence, read N- to C-terminus: Uroporphyrinogen decarboxylase (354 aa).

Residues 27 to 31 (RQAGR), D77, Y154, T209, and H327 contribute to the substrate site.

Belongs to the uroporphyrinogen decarboxylase family. Homodimer.

It is found in the cytoplasm. The catalysed reaction is uroporphyrinogen III + 4 H(+) = coproporphyrinogen III + 4 CO2. It functions in the pathway porphyrin-containing compound metabolism; protoporphyrin-IX biosynthesis; coproporphyrinogen-III from 5-aminolevulinate: step 4/4. Functionally, catalyzes the decarboxylation of four acetate groups of uroporphyrinogen-III to yield coproporphyrinogen-III. In Mannheimia succiniciproducens (strain KCTC 0769BP / MBEL55E), this protein is Uroporphyrinogen decarboxylase.